We begin with the raw amino-acid sequence, 131 residues long: Small ribosomal subunit protein uS8 (131 aa).

It belongs to the universal ribosomal protein uS8 family. In terms of assembly, part of the 30S ribosomal subunit. Contacts proteins S5 and S12.

Its function is as follows. One of the primary rRNA binding proteins, it binds directly to 16S rRNA central domain where it helps coordinate assembly of the platform of the 30S subunit. This is Small ribosomal subunit protein uS8 from Verminephrobacter eiseniae (strain EF01-2).